The sequence spans 732 residues: Exonuclease 1 (732 aa).

Positions 1 to 99 are N-domain; it reads MGITGLIPFV…KRRRDSRKQS (99 aa). Positions 30, 78, 150, 152, 171, 173, and 226 each coordinate Mg(2+). Residues 138–230 form an I-domain region; the sequence is RSRNVDCIVA…ILSGCDYLDS (93 aa). 3 disordered regions span residues 422 to 471, 524 to 625, and 661 to 716; these read YSFK…QRSP, DEQT…TNST, and SCSS…VSQN. Phosphoserine occurs at positions 431 and 433. The span at 432-442 shows a compositional bias: basic and acidic residues; the sequence is PSREDSVDQER. Thr-443 carries the post-translational modification Phosphothreonine. Residue Ser-447 is modified to Phosphoserine. Basic and acidic residues-rich tracts occupy residues 457 to 467 and 525 to 537; these read FAKERTGEEAN and EQTR…LRDT. 2 stretches are compositionally biased toward polar residues: residues 572–593 and 608–625; these read RCSS…SLLE and DLNN…TNST. The segment covering 661-677 has biased composition (low complexity); it reads SCSSDQRASSTSSSSQQ. Over residues 703-716 the composition is skewed to polar residues; that stretch reads KSRTNGKLGAVSQN.

The protein belongs to the XPG/RAD2 endonuclease family. EXO1 subfamily. Requires Mg(2+) as cofactor. As to expression, specifically expressed in the female germline.

The protein resides in the nucleus. In terms of biological role, 5'-&gt;3' double-stranded DNA exonuclease which may also contain a cryptic 3'-&gt;5' double-stranded DNA exonuclease activity. Also exhibits endonuclease activity against 5'-overhanging flap structures similar to those generated by displacement synthesis when DNA polymerase encounters the 5'-end of a downstream Okazaki fragment. Required for DNA mismatch repair (MMR). The protein is Exonuclease 1 (tos) of Drosophila melanogaster (Fruit fly).